A 383-amino-acid polypeptide reads, in one-letter code: MHC class I polypeptide-related sequence A (383 aa).

Positions 1–23 (MGLGPVFLLLAGIFPFAPPGAAA) are cleaved as a signal peptide. The Extracellular segment spans residues 24-307 (EPHSLRYNLT…GKVLVLQSHW (284 aa)). The N-linked (GlcNAc...) asparagine glycan is linked to Asn31. Residues Cys59 and Cys64 are joined by a disulfide bond. N-linked (GlcNAc...) asparagine glycosylation occurs at Asn79. Residues Cys119 and Cys187 are joined by a disulfide bond. The Ig-like C1-type domain occupies 207 to 296 (PMVNVTRSEA…SGNHSTHPVP (90 aa)). 3 N-linked (GlcNAc...) asparagine glycosylation sites follow: Asn210, Asn220, and Asn261. Cys225 and Cys282 are joined by a disulfide. The helical transmembrane segment at 308-328 (QTFHVSAVAAAAIFVIIIFYV) threads the bilayer. Residues 329–383 (RCCKKKTSAAEGPELVSLQVLDQHPVGTSDHRDATQLGFQPLMSDLGSTGSTEGA) are Cytoplasmic-facing. Residues Cys330 and Cys331 are each lipidated (S-palmitoyl cysteine).

The protein belongs to the MHC class I family. MIC subfamily. Unlike classical MHC class I molecules, does not form a heterodimer with beta-2-microglobulin. Binds as a monomer to a KLRK1/NKG2D homodimer. KLRK1 forms a complex with HCST/DAP10 in which KLRK1 binds MICA while HCST acts as an adapter molecule which enables signal transduction. Interacts with PDIA6 on the surface of tumor cells, leading to disulfide bond reduction which is required for release of MICA from tumor cells. As to quaternary structure, (Microbial infection) Interacts with human cytomegalovirus/HHV-5 protein UL142. Post-translationally, N-glycosylated. Glycosylation is not essential for interaction with KLRK1/NKG2D but enhances complex formation. In terms of processing, proteolytically cleaved and released from the cell surface of tumor cells which impairs KLRK1/NKG2D expression and T-cell activation. Palmitoylated on cysteine residues in the cytoplasmic tail leading to its association with membrane microdomains enriched in cholesterol. Post-translationally, N-glycosylation is necessary for cell surface expression. In terms of processing, (Microbial infection) Ubiquitinated by human herpesvirus 8 protein K5, leading to degradation. Widely expressed with the exception of the central nervous system where it is absent. Expressed predominantly in gastric epithelium and also in monocytes, keratinocytes, endothelial cells, fibroblasts and in the outer layer of Hassal's corpuscles within the medulla of normal thymus. In skin, expressed mainly in the keratin layers, basal cells, ducts and follicles. Also expressed in many, but not all, epithelial tumors of lung, breast, kidney, ovary, prostate and colon. In thyomas, overexpressed in cortical and medullar epithelial cells. Tumors expressing MICA display increased levels of gamma delta T-cells.

It is found in the cell membrane. It localises to the cytoplasm. Its function is as follows. Widely expressed membrane-bound protein which acts as a ligand to stimulate an activating receptor KLRK1/NKG2D, expressed on the surface of essentially all human natural killer (NK), gammadelta T and CD8 alphabeta T-cells. Up-regulated in stressed conditions, such as viral and bacterial infections or DNA damage response, serves as signal of cellular stress, and engagement of KLRK1/NKG2D by MICA triggers NK-cells resulting in a range of immune effector functions, such as cytotoxicity and cytokine production. This is MHC class I polypeptide-related sequence A from Homo sapiens (Human).